Consider the following 306-residue polypeptide: Acetyl-coenzyme A carboxylase carboxyl transferase subunit beta (306 aa).

The 270-residue stretch at 25–294 (LWIKCPETGE…TVVGANDDKT (270 aa)) folds into the CoA carboxyltransferase N-terminal domain.

It belongs to the AccD/PCCB family. In terms of assembly, acetyl-CoA carboxylase is a heterohexamer composed of biotin carboxyl carrier protein (AccB), biotin carboxylase (AccC) and two subunits each of ACCase subunit alpha (AccA) and ACCase subunit beta (AccD).

It localises to the cytoplasm. It catalyses the reaction N(6)-carboxybiotinyl-L-lysyl-[protein] + acetyl-CoA = N(6)-biotinyl-L-lysyl-[protein] + malonyl-CoA. It functions in the pathway lipid metabolism; malonyl-CoA biosynthesis; malonyl-CoA from acetyl-CoA: step 1/1. Component of the acetyl coenzyme A carboxylase (ACC) complex. Biotin carboxylase (BC) catalyzes the carboxylation of biotin on its carrier protein (BCCP) and then the CO(2) group is transferred by the transcarboxylase to acetyl-CoA to form malonyl-CoA. The sequence is that of Acetyl-coenzyme A carboxylase carboxyl transferase subunit beta from Allorhizobium ampelinum (strain ATCC BAA-846 / DSM 112012 / S4) (Agrobacterium vitis (strain S4)).